A 264-amino-acid polypeptide reads, in one-letter code: S-methyl-5'-thioadenosine phosphorylase (264 aa).

Phosphate contacts are provided by residues serine 14 and 55-56 (RH). Methionine 180 contributes to the substrate binding site. Threonine 181 contacts phosphate. 204 to 206 (DVD) lines the substrate pocket.

The protein belongs to the PNP/MTAP phosphorylase family. MTAP subfamily. As to quaternary structure, homodimer.

The enzyme catalyses S-methyl-5'-thioadenosine + phosphate = 5-(methylsulfanyl)-alpha-D-ribose 1-phosphate + adenine. It functions in the pathway amino-acid biosynthesis; L-methionine biosynthesis via salvage pathway; S-methyl-5-thio-alpha-D-ribose 1-phosphate from S-methyl-5'-thioadenosine (phosphorylase route): step 1/1. Not inhibited by adenosine, potently inhibited by MT-DADMe-immucillin A. Functionally, catalyzes the reversible phosphorylation of S-methyl-5'-thioadenosine (MTA) to adenine and 5-methylthioribose-1-phosphate. Involved in the breakdown of MTA, a major by-product of polyamine biosynthesis. Responsible for the first step in the methionine salvage pathway after MTA has been generated from S-adenosylmethionine. Prefers MTA, with 2% activity on adenosine, 0.8% activity on S-adenosyl-L-homocysteine and no activity on other tested nucleosides. This Mycobacterium tuberculosis (strain ATCC 25618 / H37Rv) protein is S-methyl-5'-thioadenosine phosphorylase.